The sequence spans 354 residues: Ferrochelatase (354 aa).

2 residues coordinate Fe cation: histidine 191 and glutamate 271.

This sequence belongs to the ferrochelatase family.

It is found in the cytoplasm. It catalyses the reaction heme b + 2 H(+) = protoporphyrin IX + Fe(2+). The protein operates within porphyrin-containing compound metabolism; protoheme biosynthesis; protoheme from protoporphyrin-IX: step 1/1. Catalyzes the ferrous insertion into protoporphyrin IX. The polypeptide is Ferrochelatase (Rickettsia bellii (strain OSU 85-389)).